Here is a 212-residue protein sequence, read N- to C-terminus: Protein-L-isoaspartate O-methyltransferase (212 aa).

Residue serine 62 is part of the active site.

This sequence belongs to the methyltransferase superfamily. L-isoaspartyl/D-aspartyl protein methyltransferase family.

The protein resides in the cytoplasm. The enzyme catalyses [protein]-L-isoaspartate + S-adenosyl-L-methionine = [protein]-L-isoaspartate alpha-methyl ester + S-adenosyl-L-homocysteine. In terms of biological role, catalyzes the methyl esterification of L-isoaspartyl residues in peptides and proteins that result from spontaneous decomposition of normal L-aspartyl and L-asparaginyl residues. It plays a role in the repair and/or degradation of damaged proteins. The protein is Protein-L-isoaspartate O-methyltransferase of Pseudoalteromonas translucida (strain TAC 125).